The following is a 72-amino-acid chain: UPF0154 protein LBA1278 (72 aa).

A helical transmembrane segment spans residues 3–23; sequence LGLAIFLIIIALLVGATAGFY.

It belongs to the UPF0154 family.

The protein resides in the cell membrane. This chain is UPF0154 protein LBA1278, found in Lactobacillus acidophilus (strain ATCC 700396 / NCK56 / N2 / NCFM).